The sequence spans 628 residues: CMP-5'-(3-aminopropyl)phosphonate synthase (628 aa).

A mobA-like NTP transferase region spans residues 1–255 (MNENRTFATP…DPGDQRQADF (255 aa)). Residues 278 to 628 (GVTDHALLYN…TTEGAGRADG (351 aa)) are decarboxylase. An N6-(pyridoxal phosphate)lysine modification is found at K466.

In the N-terminal section; belongs to the MobA family. It in the C-terminal section; belongs to the class-I pyridoxal-phosphate-dependent aminotransferase family. Requires Mg(2+) as cofactor. It depends on pyridoxal 5'-phosphate as a cofactor.

The enzyme catalyses 2-amino-4-phosphonobutanoate + CTP = CMP-5'-(3-amino-3-carboxypropyl)phosphonate + diphosphate. It catalyses the reaction CMP-5'-(3-amino-3-carboxypropyl)phosphonate + H(+) = CMP-5'-(3-aminopropyl)phosphonate + CO2. It functions in the pathway antibiotic biosynthesis. Functionally, bifunctional cytidylyltransferase/decarboxylase involved in the biosynthesis of the phosphonate antibiotic FR-900098, a potent antimalarial agent that acts as an inhibitor of 1-deoxy-D-xylulose 5-phosphate reductoisomerase (DXR), the first enzyme in the nonmevalonate pathway for isoprenoid biosynthesis. Catalyzes the condensation of 2-amino-4-phosphonobutyrate (2APn) and CTP to form CMP-5'-2APn and then decarboxylates CMP-5'-2APn to yield CMP-5'-(3-aminopropyl)phosphonate (CMP-5'-3APn). In Streptomyces rubellomurinus (strain ATCC 31215), this protein is CMP-5'-(3-aminopropyl)phosphonate synthase.